The sequence spans 101 residues: Urease subunit beta (101 aa).

This sequence belongs to the urease beta subunit family. In terms of assembly, heterotrimer of UreA (gamma), UreB (beta) and UreC (alpha) subunits. Three heterotrimers associate to form the active enzyme.

It localises to the cytoplasm. It carries out the reaction urea + 2 H2O + H(+) = hydrogencarbonate + 2 NH4(+). Its pathway is nitrogen metabolism; urea degradation; CO(2) and NH(3) from urea (urease route): step 1/1. This chain is Urease subunit beta, found in Paraburkholderia xenovorans (strain LB400).